A 293-amino-acid chain; its full sequence is Bifunctional protein FolD (293 aa).

Residues 165–167 (GRS), Ser190, and Ile231 each bind NADP(+).

This sequence belongs to the tetrahydrofolate dehydrogenase/cyclohydrolase family. In terms of assembly, homodimer.

It carries out the reaction (6R)-5,10-methylene-5,6,7,8-tetrahydrofolate + NADP(+) = (6R)-5,10-methenyltetrahydrofolate + NADPH. The catalysed reaction is (6R)-5,10-methenyltetrahydrofolate + H2O = (6R)-10-formyltetrahydrofolate + H(+). It functions in the pathway one-carbon metabolism; tetrahydrofolate interconversion. Catalyzes the oxidation of 5,10-methylenetetrahydrofolate to 5,10-methenyltetrahydrofolate and then the hydrolysis of 5,10-methenyltetrahydrofolate to 10-formyltetrahydrofolate. The protein is Bifunctional protein FolD of Parasynechococcus marenigrum (strain WH8102).